The primary structure comprises 220 residues: Carbonic anhydrase (220 aa).

Cys39, Asp41, His98, and Cys101 together coordinate Zn(2+).

The protein belongs to the beta-class carbonic anhydrase family. The cofactor is Zn(2+).

It catalyses the reaction hydrogencarbonate + H(+) = CO2 + H2O. The sequence is that of Carbonic anhydrase (cynT) from Pseudomonas aeruginosa (strain ATCC 15692 / DSM 22644 / CIP 104116 / JCM 14847 / LMG 12228 / 1C / PRS 101 / PAO1).